The following is a 362-amino-acid chain: Probable S-adenosylmethionine-dependent methyltransferase At5g37990 (362 aa).

Residues Tyr-19, Cys-66, Asn-71, Asp-107, Ser-136, and Phe-137 each contribute to the S-adenosyl-L-homocysteine site. Mg(2+)-binding residues include Asn-175, Glu-261, and Phe-263.

This sequence belongs to the methyltransferase superfamily. Type-7 methyltransferase family. Homodimer. Mg(2+) serves as cofactor.

The sequence is that of Probable S-adenosylmethionine-dependent methyltransferase At5g37990 from Arabidopsis thaliana (Mouse-ear cress).